The following is a 310-amino-acid chain: MSYVKKDLISTKDLSKDDIFSILSLAKDYKALNLEPVKKDPILKGVTVVNAFFENSTRTRTSFEIAAKRLGADAINFSSSTSSTNKGETLIDTIHNIEAMKTDIFIVRHYSSGAAKFVTKNTPSCVVNAGDGCNEHPTQALLDLLTIYEAKGSFSGLSVTIIGDIFHSRVARSNIYAMQTLGIKVKLFGPPMFMQNAEVFGCHICKDMDEAVMGSDAIIMLRIQLERSDGEVAFPSIREYSKYFGLTKTRMQKAKDDVIILHPGPINRGVEINSDVADDARFSSILDQVENGVAIRMAVLKTIYQNKFKA.

Residues Arg-58 and Thr-59 each contribute to the carbamoyl phosphate site. Lys-86 lines the L-aspartate pocket. Residues Arg-108, His-136, and Gln-139 each coordinate carbamoyl phosphate. Residues Arg-169 and Arg-222 each coordinate L-aspartate. Residues Gly-264 and Pro-265 each contribute to the carbamoyl phosphate site.

This sequence belongs to the aspartate/ornithine carbamoyltransferase superfamily. ATCase family. In terms of assembly, heterododecamer (2C3:3R2) of six catalytic PyrB chains organized as two trimers (C3), and six regulatory PyrI chains organized as three dimers (R2).

It carries out the reaction carbamoyl phosphate + L-aspartate = N-carbamoyl-L-aspartate + phosphate + H(+). It functions in the pathway pyrimidine metabolism; UMP biosynthesis via de novo pathway; (S)-dihydroorotate from bicarbonate: step 2/3. Its function is as follows. Catalyzes the condensation of carbamoyl phosphate and aspartate to form carbamoyl aspartate and inorganic phosphate, the committed step in the de novo pyrimidine nucleotide biosynthesis pathway. This chain is Aspartate carbamoyltransferase catalytic subunit, found in Campylobacter fetus subsp. fetus (strain 82-40).